The following is a 645-amino-acid chain: Cysteine-rich receptor-like protein kinase 10 (645 aa).

The first 27 residues, 1 to 27 (MSMACYYLAAAAAGLALLLLHAPLTDA), serve as a signal peptide directing secretion. 2 consecutive Gnk2-homologous domains span residues 28–132 (QTLV…NDAF) and 140–251 (SQGM…VYPF). Over 28–283 (QTLVPLCGDS…AGERSKNKRS (256 aa)) the chain is Extracellular. N-linked (GlcNAc...) asparagine glycosylation is found at Asn-39 and Asn-91. 2 disulfides stabilise this stretch: Cys-86-Cys-95 and Cys-98-Cys-123. N-linked (GlcNAc...) asparagine glycosylation is found at Asn-151 and Asn-169. Cystine bridges form between Cys-204/Cys-213 and Cys-216/Cys-242. A helical transmembrane segment spans residues 284–304 (AILAISMPTIALVLATIAAWF). The Cytoplasmic portion of the chain corresponds to 305–645 (CSTSWRRRRL…WVQEIGATAS (341 aa)). The region spanning 348 to 619 (FSEHKRLGEG…PLMSAVNAML (272 aa)) is the Protein kinase domain. Residues 354–362 (LGEGGFGVV) and Lys-376 each bind ATP. Residue Asp-473 is the Proton acceptor of the active site.

Belongs to the protein kinase superfamily. Ser/Thr protein kinase family. CRK subfamily.

It is found in the membrane. In terms of biological role, involved in disease resistance. Required for NPR1/NH1-mediated immunity to the bacterial blight pathogen Xanthomomas oryzae pv. oryzae (Xoo). Required for the benzothiadiazole (BTH)-induced immune response. Probably regulated by the transcription factor TGA2.1. The sequence is that of Cysteine-rich receptor-like protein kinase 10 from Oryza sativa subsp. japonica (Rice).